The following is a 588-amino-acid chain: Aspartate--tRNA ligase (588 aa).

Glu177 contributes to the L-aspartate binding site. Residues 201-204 form an aspartate region; sequence QLFK. Arg223 contacts L-aspartate. ATP-binding positions include 223–225 and Gln232; that span reads RDE. Residue His451 coordinates L-aspartate. Position 485 (Glu485) interacts with ATP. Residue Arg492 coordinates L-aspartate. 537-540 provides a ligand contact to ATP; sequence GLDR.

Belongs to the class-II aminoacyl-tRNA synthetase family. Type 1 subfamily. As to quaternary structure, homodimer.

It is found in the cytoplasm. The enzyme catalyses tRNA(Asp) + L-aspartate + ATP = L-aspartyl-tRNA(Asp) + AMP + diphosphate. Functionally, catalyzes the attachment of L-aspartate to tRNA(Asp) in a two-step reaction: L-aspartate is first activated by ATP to form Asp-AMP and then transferred to the acceptor end of tRNA(Asp). In Staphylococcus aureus (strain Newman), this protein is Aspartate--tRNA ligase.